Here is a 339-residue protein sequence, read N- to C-terminus: RNA 3'-terminal phosphate cyclase (339 aa).

Residues aspartate 109 and 286-290 (HLADQ) each bind ATP. Histidine 310 (tele-AMP-histidine intermediate) is an active-site residue.

This sequence belongs to the RNA 3'-terminal cyclase family. Type 1 subfamily.

It is found in the cytoplasm. It catalyses the reaction a 3'-end 3'-phospho-ribonucleotide-RNA + ATP = a 3'-end 2',3'-cyclophospho-ribonucleotide-RNA + AMP + diphosphate. Catalyzes the conversion of 3'-phosphate to a 2',3'-cyclic phosphodiester at the end of RNA. The mechanism of action of the enzyme occurs in 3 steps: (A) adenylation of the enzyme by ATP; (B) transfer of adenylate to an RNA-N3'P to produce RNA-N3'PP5'A; (C) and attack of the adjacent 2'-hydroxyl on the 3'-phosphorus in the diester linkage to produce the cyclic end product. The biological role of this enzyme is unknown but it is likely to function in some aspects of cellular RNA processing. This Halobacterium salinarum (strain ATCC 29341 / DSM 671 / R1) protein is RNA 3'-terminal phosphate cyclase.